A 178-amino-acid chain; its full sequence is UPF0114 protein in repA1-repA2 intergenic region (178 aa).

The next 3 membrane-spanning stretches (helical) occupy residues 14 to 34 (WLIFPIYLGLSFCLILLTLKF), 53 to 73 (LILVILSLIDIVLVGGLLVMV), and 136 to 156 (WYVIIHLTFVVSAGGMAYIDR).

The protein belongs to the UPF0114 family.

The protein resides in the cell membrane. In Buchnera aphidicola subsp. Tetraneura caerulescens, this protein is UPF0114 protein in repA1-repA2 intergenic region.